Reading from the N-terminus, the 97-residue chain is Co-chaperonin GroES (97 aa).

It belongs to the GroES chaperonin family. Heptamer of 7 subunits arranged in a ring. Interacts with the chaperonin GroEL.

It is found in the cytoplasm. Together with the chaperonin GroEL, plays an essential role in assisting protein folding. The GroEL-GroES system forms a nano-cage that allows encapsulation of the non-native substrate proteins and provides a physical environment optimized to promote and accelerate protein folding. GroES binds to the apical surface of the GroEL ring, thereby capping the opening of the GroEL channel. The sequence is that of Co-chaperonin GroES from Bifidobacterium longum (strain NCC 2705).